We begin with the raw amino-acid sequence, 519 residues long: 2,3-bisphosphoglycerate-independent phosphoglycerate mutase (519 aa).

Positions 18 and 68 each coordinate Mn(2+). Ser-68 functions as the Phosphoserine intermediate in the catalytic mechanism. Substrate is bound by residues His-129, 159 to 160, Arg-191, Arg-197, 267 to 270, and Lys-341; these read RD and RADR. 5 residues coordinate Mn(2+): Asp-408, His-412, Asp-449, His-450, and His-468.

It belongs to the BPG-independent phosphoglycerate mutase family. In terms of assembly, monomer. It depends on Mn(2+) as a cofactor.

The enzyme catalyses (2R)-2-phosphoglycerate = (2R)-3-phosphoglycerate. The protein operates within carbohydrate degradation; glycolysis; pyruvate from D-glyceraldehyde 3-phosphate: step 3/5. In terms of biological role, catalyzes the interconversion of 2-phosphoglycerate and 3-phosphoglycerate. This is 2,3-bisphosphoglycerate-independent phosphoglycerate mutase from Coxiella burnetii (strain Dugway 5J108-111).